The primary structure comprises 328 residues: DNA-directed RNA polymerase subunit alpha (328 aa).

Residues 1–231 form an alpha N-terminal domain (alpha-NTD) region; that stretch reads MIYQMQMPTK…DHITFFANFS (231 aa). The segment at 247-328 is alpha C-terminal domain (alpha-CTD); that stretch reads DEFESMRKLL…MDITRYQLKG (82 aa).

It belongs to the RNA polymerase alpha chain family. As to quaternary structure, homodimer. The RNAP catalytic core consists of 2 alpha, 1 beta, 1 beta' and 1 omega subunit. When a sigma factor is associated with the core the holoenzyme is formed, which can initiate transcription.

It catalyses the reaction RNA(n) + a ribonucleoside 5'-triphosphate = RNA(n+1) + diphosphate. Its function is as follows. DNA-dependent RNA polymerase catalyzes the transcription of DNA into RNA using the four ribonucleoside triphosphates as substrates. The polypeptide is DNA-directed RNA polymerase subunit alpha (Chlorobaculum tepidum (strain ATCC 49652 / DSM 12025 / NBRC 103806 / TLS) (Chlorobium tepidum)).